Here is a 63-residue protein sequence, read N- to C-terminus: Large ribosomal subunit protein bL33 (63 aa).

It belongs to the bacterial ribosomal protein bL33 family.

This is Large ribosomal subunit protein bL33 from Gloeobacter violaceus (strain ATCC 29082 / PCC 7421).